Here is a 424-residue protein sequence, read N- to C-terminus: MGCFGRTPKSNKRSDTKTTKNNDFTPKKLTVNANRDKLTQPSSDCLKVSICGDVSKEIVTKKDQLALDAKDTNVEDEVIVKKAQTFTFEELSVSTGNFKSDCFLGEGGFGKVYKGFIEKINQVVAIKQLDRNGAQGIREFVVEVLTLSLADHPNLVKLIGFCAEGVQRLLVYEYMPLGSLDNHLHDLPSGKNPLAWNTRMKIAAGAARGLEYLHDTMKPPVIYRDLKCSNILIDEGYHAKLSDFGLAKVGPRGSETHVSTRVMGTYGYCAPDYALTGQLTFKSDVYSFGVVLLELITGRKAYDNTRTRNHQSLVEWANPLFKDRKNFKKMVDPLLEGDYPVRGLYQALAIAAMCVQEQPSMRPVIADVVMALDHLASSKYDRSHRQKQDNVTETKVDEEKTLTTESNVCVEEKQEIKICSDQAT.

Residues 1-26 (MGCFGRTPKSNKRSDTKTTKNNDFTP) are disordered. Glycine 2 carries the N-myristoyl glycine lipid modification. Cysteine 3 carries the S-palmitoyl cysteine lipid modification. Threonine 87 bears the Phosphothreonine mark. Residues 98–377 (FKSDCFLGEG…VVMALDHLAS (280 aa)) form the Protein kinase domain. Residues 104 to 112 (LGEGGFGKV) and lysine 127 each bind ATP. A Phosphotyrosine modification is found at tyrosine 172. Aspartate 225 serves as the catalytic Proton acceptor. Residues serine 229 and serine 259 each carry the phosphoserine modification. Phosphothreonine occurs at positions 260 and 265. Tyrosine 273 carries the phosphotyrosine modification.

The protein belongs to the protein kinase superfamily. Ser/Thr protein kinase family.

The protein localises to the cell membrane. It carries out the reaction L-seryl-[protein] + ATP = O-phospho-L-seryl-[protein] + ADP + H(+). It catalyses the reaction L-threonyl-[protein] + ATP = O-phospho-L-threonyl-[protein] + ADP + H(+). Functionally, may be involved in plant defense signaling. The protein is Probable serine/threonine-protein kinase PBL6 of Arabidopsis thaliana (Mouse-ear cress).